We begin with the raw amino-acid sequence, 492 residues long: Dipeptide permease D (492 aa).

13 helical membrane-spanning segments follow: residues 14 to 34 (VVAL…LLIL), 49 to 69 (ALFS…GYLA), 91 to 111 (LVLG…AIIV), 138 to 158 (GGFS…PIAC), 167 to 187 (WAMG…IFLC), 212 to 232 (NWGW…VLFW), 236 to 256 (SVYA…RIYL), 269 to 289 (LIVV…QGGS), 312 to 332 (MFQS…AWLV), 344 to 364 (IWGK…ILTL), 379 to 399 (LMVL…PVAM), 413 to 433 (VLTG…AGVI), and 458 to 478 (VFSQ…VIWL).

The protein belongs to the major facilitator superfamily. Proton-dependent oligopeptide transporter (POT/PTR) (TC 2.A.17) family. DtpD subfamily.

It localises to the cell inner membrane. Probable proton-dependent permease that transports dipeptides. The protein is Dipeptide permease D of Klebsiella pneumoniae (strain 342).